Consider the following 90-residue polypeptide: Auxin-responsive protein SAUR24 (90 aa).

It belongs to the ARG7 family.

It localises to the cell membrane. Functionally, functions as a positive effector of cell expansion through modulation of auxin transport. This Arabidopsis thaliana (Mouse-ear cress) protein is Auxin-responsive protein SAUR24.